The primary structure comprises 272 residues: Ribonuclease HII (272 aa).

The region spanning G30–V221 is the RNase H type-2 domain. Residues D36, E37, and D130 each contribute to the a divalent metal cation site.

The protein belongs to the RNase HII family. Mn(2+) is required as a cofactor. Mg(2+) serves as cofactor.

The protein localises to the cytoplasm. It carries out the reaction Endonucleolytic cleavage to 5'-phosphomonoester.. Endonuclease that specifically degrades the RNA of RNA-DNA hybrids. The sequence is that of Ribonuclease HII from Mycolicibacterium smegmatis (strain ATCC 700084 / mc(2)155) (Mycobacterium smegmatis).